The following is a 459-amino-acid chain: Phosphomethylpyrimidine synthase (459 aa).

Residues asparagine 81, methionine 110, tyrosine 140, histidine 176, 196–198 (SRG), 237–240 (DSLR), and glutamate 276 each bind substrate. Residue histidine 280 participates in Zn(2+) binding. Tyrosine 303 serves as a coordination point for substrate. Histidine 344 contributes to the Zn(2+) binding site. Residues cysteine 424, cysteine 427, and cysteine 432 each coordinate [4Fe-4S] cluster.

It belongs to the ThiC family. It depends on [4Fe-4S] cluster as a cofactor.

The enzyme catalyses 5-amino-1-(5-phospho-beta-D-ribosyl)imidazole + S-adenosyl-L-methionine = 4-amino-2-methyl-5-(phosphooxymethyl)pyrimidine + CO + 5'-deoxyadenosine + formate + L-methionine + 3 H(+). It functions in the pathway cofactor biosynthesis; thiamine diphosphate biosynthesis. Functionally, catalyzes the synthesis of the hydroxymethylpyrimidine phosphate (HMP-P) moiety of thiamine from aminoimidazole ribotide (AIR) in a radical S-adenosyl-L-methionine (SAM)-dependent reaction. The protein is Phosphomethylpyrimidine synthase of Gloeobacter violaceus (strain ATCC 29082 / PCC 7421).